Reading from the N-terminus, the 365-residue chain is Putative glycosyltransferase C06E1.7 (365 aa).

This sequence belongs to the glycosyltransferase 11 family.

This chain is Putative glycosyltransferase C06E1.7, found in Caenorhabditis elegans.